Reading from the N-terminus, the 218-residue chain is Probable transaldolase (218 aa).

Residue Lys-84 is the Schiff-base intermediate with substrate of the active site.

It belongs to the transaldolase family. Type 3B subfamily.

The protein localises to the cytoplasm. The enzyme catalyses D-sedoheptulose 7-phosphate + D-glyceraldehyde 3-phosphate = D-erythrose 4-phosphate + beta-D-fructose 6-phosphate. The protein operates within carbohydrate degradation; pentose phosphate pathway; D-glyceraldehyde 3-phosphate and beta-D-fructose 6-phosphate from D-ribose 5-phosphate and D-xylulose 5-phosphate (non-oxidative stage): step 2/3. Transaldolase is important for the balance of metabolites in the pentose-phosphate pathway. This chain is Probable transaldolase, found in Bartonella henselae (strain ATCC 49882 / DSM 28221 / CCUG 30454 / Houston 1) (Rochalimaea henselae).